Here is a 126-residue protein sequence, read N- to C-terminus: uncharacterized protein (126 aa).

Residues 4-126 (RIDHTGIMVR…DGEWIEFFQR (123 aa)) enclose the VOC domain. A divalent metal cation contacts are provided by His7, Glu42, His74, and Glu122.

It belongs to the glyoxalase I family.

This is an uncharacterized protein from Bacillus subtilis (strain 168).